The following is a 355-amino-acid chain: MAFGGAQASYINPVVPFTGMIQGGLQDGHKITIIGAVLPSGGNRFAVNLQTGYNDSDIAFHFNPRFEEGGYVVCNTKQRGSWGTEERKMHMPFQRGCSFELCFQVQSSDFRVMVNGNLFTQYAHRVPFHRIDAISITGVVQLSSISFQNIRAAPKQPACSKVQFSQAVCLPPRPRGRKSNPPGIWPANSAPIAQTFVHTIHSAPGQMFPNPVIPPAVYPNPVYQLPFFTSILGGLYPSKSILVSGTILPSAQRFYINLRSGSDIAFHLNPRFNENAVVRNTQINGSWGSEERSLPRGMPFFRGQSFSVWIMCEGHCFKVAVDSQHLFEYHHRLKNLPAINNLEVGGDIQLTHVQT.

Galectin domains follow at residues 17-148 (FTGM…ISFQ) and 227-355 (FFTS…HVQT). A beta-D-galactoside contacts are provided by residues N48, H61, R65, N75, 82–88 (WGTEERK), H267, R271, T281, and 287–293 (WGSEERS).

It localises to the cytoplasm. The protein localises to the nucleus. The protein resides in the secreted. Binds galactosides. Has high affinity for the Forssman pentasaccharide. Ligand for HAVCR2/TIM3. Binding to HAVCR2 induces T-helper type 1 lymphocyte (Th1) death. Also stimulates bactericidal activity in infected macrophages by causing macrophage activation and IL1B secretion which restricts intracellular bacterial growth. Ligand for P4HB; the interaction retains P4HB at the cell surface of Th2 T helper cells, increasing disulfide reductase activity at the plasma membrane, altering the plasma membrane redox state and enhancing cell migration. Ligand for CD44; the interaction enhances binding of SMAD3 to the FOXP3 promoter, leading to up-regulation of FOXP3 expression and increased induced regulatory T (iTreg) cell stability and suppressive function. Promotes ability of mesenchymal stromal cells to suppress T-cell proliferation. Expands regulatory T-cells and induces cytotoxic T-cell apoptosis following virus infection. Activates ERK1/2 phosphorylation inducing cytokine (IL-6, IL-8, IL-12) and chemokine (CCL2) production in mast and dendritic cells. Inhibits degranulation and induces apoptosis of mast cells. Induces maturation and migration of dendritic cells. Inhibits natural killer (NK) cell function. Can transform NK cell phenotype from peripheral to decidual during pregnancy. Astrocyte derived galectin-9 enhances microglial TNF production. May play a role in thymocyte-epithelial interactions relevant to the biology of the thymus. May provide the molecular basis for urate flux across cell membranes, allowing urate that is formed during purine metabolism to efflux from cells and serving as an electrogenic transporter that plays an important role in renal and gastrointestinal urate excretion. Highly selective to the anion urate. The protein is Galectin-9 (LGALS9) of Bos taurus (Bovine).